A 103-amino-acid polypeptide reads, in one-letter code: Large ribosomal subunit protein bL21 (103 aa).

This sequence belongs to the bacterial ribosomal protein bL21 family. Part of the 50S ribosomal subunit. Contacts protein L20.

This protein binds to 23S rRNA in the presence of protein L20. This is Large ribosomal subunit protein bL21 from Yersinia enterocolitica serotype O:8 / biotype 1B (strain NCTC 13174 / 8081).